We begin with the raw amino-acid sequence, 202 residues long: Transmembrane 4 L6 family member 4 (202 aa).

The Cytoplasmic segment spans residues 1 to 9 (MCTGGCARC). A helical transmembrane segment spans residues 10-30 (LGGTLIPLAVFGLLANILLFF). The Extracellular segment spans residues 31 to 48 (PGGKVVNDKSHLSDEVWY). Residues 49-69 (FGGILGSGVLMIFPALVFLGL) form a helical membrane-spanning segment. Over 70 to 93 (QNNDCCGCCGNEGCGKRFAMFTST) the chain is Cytoplasmic. A helical transmembrane segment spans residues 94–114 (LFAVIGFLGAGYSFIVSAVSI). Residues 115 to 158 (NKGPKCFMANGTWGYPFHDGDYLKDQALWSECEEPRDVVPWNLT) are Extracellular-facing. N156 carries an N-linked (GlcNAc...) asparagine glycan. The helical transmembrane segment at 159-179 (LFSILLVIGGIQMVLCAIQVI) threads the bilayer. Residues 180–202 (NGLLGTLCGDCQCCGCCGGDGPV) lie on the Cytoplasmic side of the membrane.

The protein belongs to the L6 tetraspanin family.

It localises to the membrane. In terms of biological role, regulates the adhesive and proliferative status of intestinal epithelial cells. Can mediate density-dependent cell proliferation. The polypeptide is Transmembrane 4 L6 family member 4 (Tm4sf4) (Mus musculus (Mouse)).